We begin with the raw amino-acid sequence, 360 residues long: Catabolic L-serine/threonine dehydratase (360 aa).

An N-acetylserine modification is found at S2. Position 37 is an N6-(pyridoxal phosphate)lysine (K37).

The protein belongs to the serine/threonine dehydratase family. Pyridoxal 5'-phosphate serves as cofactor.

The protein resides in the mitochondrion. The enzyme catalyses L-serine = pyruvate + NH4(+). It catalyses the reaction L-threonine = 2-oxobutanoate + NH4(+). This Saccharomyces cerevisiae (strain ATCC 204508 / S288c) (Baker's yeast) protein is Catabolic L-serine/threonine dehydratase (CHA1).